Consider the following 297-residue polypeptide: Protein MIZU-KUSSEI 1 (297 aa).

In terms of tissue distribution, expressed in root meristematic region, cortical cells, lateral root cap cells, columella cells of the root cap, mature region of the roots and leaf hydathodes.

It is found in the endoplasmic reticulum membrane. In terms of biological role, plays a role in lateral root development by maintaining auxin levels. This function requires GNOM (GN/MIZ2) activity. Negatively regulates cytokinin sensitivity on root development. Positively regulates hydrotropism in roots. In Arabidopsis thaliana (Mouse-ear cress), this protein is Protein MIZU-KUSSEI 1 (MIZ1).